We begin with the raw amino-acid sequence, 184 residues long: Probable RNA 2'-phosphotransferase (184 aa).

It belongs to the KptA/TPT1 family.

Functionally, removes the 2'-phosphate from RNA via an intermediate in which the phosphate is ADP-ribosylated by NAD followed by a presumed transesterification to release the RNA and generate ADP-ribose 1''-2''-cyclic phosphate (APPR&gt;P). May function as an ADP-ribosylase. The sequence is that of Probable RNA 2'-phosphotransferase from Burkholderia pseudomallei (strain K96243).